The following is a 153-amino-acid chain: UPF0178 protein Sfum_1097 (153 aa).

It belongs to the UPF0178 family.

The polypeptide is UPF0178 protein Sfum_1097 (Syntrophobacter fumaroxidans (strain DSM 10017 / MPOB)).